The following is a 488-amino-acid chain: Retinoic acid receptor RXR-alpha (488 aa).

The tract at residues 1-160 (MSSAAMDTKH…GAMASFTKHI (160 aa)) is modulating. Residue lysine 134 forms a Glycyl lysine isopeptide (Lys-Gly) (interchain with G-Cter in SUMO) linkage. Positions 158-233 (KHICAICGDR…MGMKREAVQE (76 aa)) form a DNA-binding region, nuclear receptor. Residues cysteine 161, cysteine 164, cysteine 178, and cysteine 181 each coordinate Zn(2+). Residues 161-181 (CAICGDRSSGKHYGVYSCEGC) form an NR C4-type zinc finger. The tract at residues 186–191 (KRTVRK) is nuclear localization signal. Residues cysteine 197, cysteine 203, cysteine 213, and cysteine 216 each contribute to the Zn(2+) site. An NR C4-type zinc finger spans residues 197–216 (CRDSKDCMIDKRQRNRCQYC). Residues 227–250 (KREAVQEERQRGKERNENEVESSN) are hinge. Residues 232-244 (QEERQRGKERNEN) are compositionally biased toward basic and acidic residues. The tract at residues 232–256 (QEERQRGKERNENEVESSNSANEDM) is disordered. One can recognise an NR LBD domain in the interval 253–484 (NEDMPVEKIL…TFLMEMLEAP (232 aa)). 9-cis-retinoate contacts are provided by arginine 342 and alanine 353. All-trans-retinoate contacts are provided by arginine 342 and alanine 353. The tract at residues 374 to 394 (RVLTELVSKMRDMQMDKTELG) is required for nuclear export. The tract at residues 473 to 484 (IDTFLMEMLEAP) is AF-2.

Belongs to the nuclear hormone receptor family. NR2 subfamily. As to quaternary structure, homodimer. Heterodimer; with a rar molecule. Binds DNA preferentially as a rar/rxr heterodimer. Interacts with coactivator ncoa3 and with senp6. In terms of processing, sumoylated on Lys-134; which negatively regulates transcriptional activity. Desumoylated specifically by SENP6.

The protein localises to the nucleus. Functionally, receptor for retinoic acid that acts as a transcription factor. Forms homo- or heterodimers with retinoic acid receptors (rars) and binds to target response elements in response to their ligands, all-trans or 9-cis retinoic acid, to regulate gene expression in various biological processes. The rar/rxr heterodimers bind to the retinoic acid response elements (RARE) composed of tandem 5'-AGGTCA-3' sites known as DR1-DR5 to regulate transcription. The high affinity ligand for rxrs is 9-cis retinoic acid. In the absence of ligand, the rar/rxr heterodimers associate with a multiprotein complex containing transcription corepressors that induce histone deacetylation, chromatin condensation and transcriptional suppression. On ligand binding, the corepressors dissociate from the receptors and coactivators are recruited leading to transcriptional activation. This Xenopus laevis (African clawed frog) protein is Retinoic acid receptor RXR-alpha (rxra).